The sequence spans 524 residues: Alkaline phosphatase, tissue-nonspecific isozyme (524 aa).

The first 17 residues, 1–17 (MISPFLVLAIGTCLTNS), serve as a signal peptide directing secretion. D60 contacts Mg(2+). 2 residues coordinate Zn(2+): D60 and S110. Catalysis depends on S110, which acts as the Phosphoserine intermediate. S110 is modified (phosphoserine). Cysteines 139 and 201 form a disulfide. N140 is a glycosylation site (N-linked (GlcNAc...) asparagine). A Mg(2+)-binding site is contributed by T173. N-linked (GlcNAc...) asparagine glycosylation occurs at N230. Residue E235 participates in Ca(2+) binding. N271 carries an N-linked (GlcNAc...) asparagine glycan. 2 residues coordinate Ca(2+): F290 and E291. N303 carries N-linked (GlcNAc...) asparagine glycosylation. D306 is a Ca(2+) binding site. Residue E332 participates in Mg(2+) binding. Zn(2+) contacts are provided by D337, H341, D378, and H379. N-linked (GlcNAc...) asparagine glycosylation occurs at N430. H454 serves as a coordination point for Zn(2+). A disulfide bridge connects residues C489 and C497. S501 carries GPI-anchor amidated serine lipidation. Positions 502-524 (SAGSLAAGPLLLALALYPLSVLF) are cleaved as a propeptide — removed in mature form.

This sequence belongs to the alkaline phosphatase family. Homodimer. Mg(2+) serves as cofactor. Zn(2+) is required as a cofactor. The cofactor is Ca(2+). Post-translationally, N-glycosylated.

It is found in the cell membrane. Its subcellular location is the extracellular vesicle membrane. It localises to the mitochondrion membrane. The protein resides in the mitochondrion intermembrane space. The enzyme catalyses a phosphate monoester + H2O = an alcohol + phosphate. It carries out the reaction diphosphate + H2O = 2 phosphate + H(+). The catalysed reaction is pyridoxal 5'-phosphate + H2O = pyridoxal + phosphate. It catalyses the reaction phosphoethanolamine + H2O = ethanolamine + phosphate. The enzyme catalyses N-phosphocreatine + H2O = creatine + phosphate. It carries out the reaction ATP + H2O = ADP + phosphate + H(+). The catalysed reaction is ADP + H2O = AMP + phosphate + H(+). It catalyses the reaction AMP + H2O = adenosine + phosphate. Its activity is regulated as follows. Phosphatase activity is specifically inhibited by 5-((5-chloro-2-methoxyphenyl)sulfonamido)nicotinamide (SBI-425). Its function is as follows. Alkaline phosphatase that metabolizes various phosphate compounds and plays a key role in skeletal mineralization and adaptive thermogenesis. Has broad substrate specificity and can hydrolyze a considerable variety of compounds: however, only a few substrates, such as diphosphate (inorganic pyrophosphate; PPi), pyridoxal 5'-phosphate (PLP) and N-phosphocreatine are natural substrates. Plays an essential role in skeletal and dental mineralization via its ability to hydrolyze extracellular diphosphate, a potent mineralization inhibitor, to phosphate: it thereby promotes hydroxyapatite crystal formation and increases inorganic phosphate concentration. Acts in a non-redundant manner with PHOSPHO1 in skeletal mineralization: while PHOSPHO1 mediates the initiation of hydroxyapatite crystallization in the matrix vesicles (MVs), ALPL/TNAP catalyzes the spread of hydroxyapatite crystallization in the extracellular matrix. Also promotes dephosphorylation of osteopontin (SSP1), an inhibitor of hydroxyapatite crystallization in its phosphorylated state; it is however unclear whether ALPL/TNAP mediates SSP1 dephosphorylation via a direct or indirect manner. Catalyzes dephosphorylation of PLP to pyridoxal (PL), the transportable form of vitamin B6, in order to provide a sufficient amount of PLP in the brain, an essential cofactor for enzymes catalyzing the synthesis of diverse neurotransmitters. Additionally, also able to mediate ATP degradation in a stepwise manner to adenosine, thereby regulating the availability of ligands for purinergic receptors. Also capable of dephosphorylating microbial products, such as lipopolysaccharides (LPS) as well as other phosphorylated small-molecules, such as poly-inosine:cytosine (poly I:C). Acts as a key regulator of adaptive thermogenesis as part of the futile creatine cycle: localizes to the mitochondria of thermogenic fat cells and acts by mediating hydrolysis of N-phosphocreatine to initiate a futile cycle of creatine dephosphorylation and phosphorylation. During the futile creatine cycle, creatine and N-phosphocreatine are in a futile cycle, which dissipates the high energy charge of N-phosphocreatine as heat without performing any mechanical or chemical work. This is Alkaline phosphatase, tissue-nonspecific isozyme from Homo sapiens (Human).